Reading from the N-terminus, the 506-residue chain is Asparagine--tRNA ligase (506 aa).

It belongs to the class-II aminoacyl-tRNA synthetase family. In terms of assembly, homodimer.

It is found in the cytoplasm. It carries out the reaction tRNA(Asn) + L-asparagine + ATP = L-asparaginyl-tRNA(Asn) + AMP + diphosphate + H(+). The sequence is that of Asparagine--tRNA ligase from Onion yellows phytoplasma (strain OY-M).